A 60-amino-acid polypeptide reads, in one-letter code: Large ribosomal subunit protein uL30 (60 aa).

This sequence belongs to the universal ribosomal protein uL30 family. As to quaternary structure, part of the 50S ribosomal subunit.

The protein is Large ribosomal subunit protein uL30 of Burkholderia mallei (strain NCTC 10247).